We begin with the raw amino-acid sequence, 655 residues long: Ankyrin repeat and SAM domain-containing protein 3 (655 aa).

The interval M1–S421 is interaction with NEK7. Residues S2 and S5 each carry the phosphoserine modification. ANK repeat units lie at residues D34–K64, G68–V97, E101–M130, H134–V163, Y168–T197, and S201–L220. 3-hydroxyasparagine is present on N96. Residues S201, S225, S243, S244, and S245 each carry the phosphoserine modification. Positions Y314 to P426 are disordered. T318 is subject to Phosphothreonine. 4 positions are modified to phosphoserine: S319, S366, S369, and S373. Over residues K378–H395 the composition is skewed to basic residues. An SAM domain is found at S424–S487. Residues A500–A575 adopt a coiled-coil conformation. The residue at position 540 (S540) is a Phosphoserine.

As to quaternary structure, homooligomer. Interacts (via SAM domain) with ANKS6 (via SAM domain). Interacts with BICC1. Interacts with NPHP1. Interacts with NEK8. Interacts with HIF1AN. Interacts with NEK7; this interaction alters the subcellular distribution of NEK7 by preventing its nuclear translocation. Post-translationally, hydroxylated at Asn-96, most probably by HIF1AN. In terms of processing, phosphorylations at Ser-5, Ser-225, Thr-318, Ser-319, Ser-366 and Ser-369 occur in a NEK7-dependent manner. Polyubiquitinated. In terms of tissue distribution, kidney (at protein level).

Its subcellular location is the cell projection. It localises to the cilium. The protein resides in the cytoplasm. In terms of biological role, may be involved in vasopressin signaling in the kidney. The polypeptide is Ankyrin repeat and SAM domain-containing protein 3 (Anks3) (Mus musculus (Mouse)).